Reading from the N-terminus, the 158-residue chain is NAD(P)H-quinone oxidoreductase subunit N (158 aa).

The protein belongs to the complex I NdhN subunit family. As to quaternary structure, NDH-1 can be composed of about 15 different subunits; different subcomplexes with different compositions have been identified which probably have different functions.

Its subcellular location is the cellular thylakoid membrane. The enzyme catalyses a plastoquinone + NADH + (n+1) H(+)(in) = a plastoquinol + NAD(+) + n H(+)(out). It catalyses the reaction a plastoquinone + NADPH + (n+1) H(+)(in) = a plastoquinol + NADP(+) + n H(+)(out). NDH-1 shuttles electrons from an unknown electron donor, via FMN and iron-sulfur (Fe-S) centers, to quinones in the respiratory and/or the photosynthetic chain. The immediate electron acceptor for the enzyme in this species is believed to be plastoquinone. Couples the redox reaction to proton translocation, and thus conserves the redox energy in a proton gradient. Cyanobacterial NDH-1 also plays a role in inorganic carbon-concentration. The protein is NAD(P)H-quinone oxidoreductase subunit N of Prochlorococcus marinus (strain MIT 9301).